Consider the following 68-residue polypeptide: Small ribosomal subunit protein eS17 (68 aa).

Belongs to the eukaryotic ribosomal protein eS17 family.

The polypeptide is Small ribosomal subunit protein eS17 (Staphylothermus marinus (strain ATCC 43588 / DSM 3639 / JCM 9404 / F1)).